We begin with the raw amino-acid sequence, 125 residues long: Napin-3 (125 aa).

Cystine bridges form between Cys10–Cys62, Cys23–Cys51, Cys52–Cys107, and Cys64–Cys115.

This sequence belongs to the 2S seed storage albumins family. In terms of assembly, the mature protein consists of a small and a large chain linked by disulfide bonds.

The small, basic, water-soluble napins are one of the two major kinds of storage proteins synthesized in the seed during its maturation. This Brassica napus (Rape) protein is Napin-3.